The chain runs to 509 residues: MEELQGYLEIDRSRQQHFLYPLLFQEYIYALAHDHGLNGSIFYEPMENLGYDNKSSSLIAKRLITRMHQQNHLIISISVNDSKQNRFVGHNKNLYSQMVSEGFAVIVEIPFSLRLVSSLEEKEIEKSHNLRSIHSIFPFFEDKLSHLNHVSDILIPHPIHLEILVQTLRCWVQDAPSLHLLRFFLHEYGNSNSLITPKKSISFFSKENQRFFLFLYNSHVYECESVFVFLRKPFSHLRSTSFGAFLERIHFYGKTEHLVVVPRNYFQKTLWLFKDPFMHYARYQGKSILASKGTHLLMKKWKSHLVHFWQYHFYLWSQPDRIHINQLCNHSFYFLGYFSSVRLNLSVVRSEMLENSFLIDTSIKKFETLAPIIPLIGSLAKAKFCNVSGHPISKSVWANSSDSDILNRFGRIYRNLSHYHSGSSKKQILYRIKYILRLSCARTLARKHKSTVRTFLKRLGSEFLEEFLTEEEQVLSLIFPRTSFPFYRSHRERIWYLDIIRINDLANHE.

The protein belongs to the intron maturase 2 family. MatK subfamily.

The protein localises to the plastid. It localises to the chloroplast. Its function is as follows. Usually encoded in the trnK tRNA gene intron. Probably assists in splicing its own and other chloroplast group II introns. The polypeptide is Maturase K (Galbulimima belgraveana (Northern pigeonberry ash)).